The sequence spans 608 residues: MEMESTAASTRFHQPHMERKMSAMTCEIFNELRLEGKLCDVVIKVNGFEFNAHKNILCSCSSYFRALFTSGWNNTEKKVYNIPGISPDMMKLIIEYAYTRTVPITPDNVEKLLAAADQFNIMGIVRGCCEFLKSELCLDNCIGICKFTDYYYCPELRQKAYMFILHNFEEMVKVSAEFLELSVTELKDIIEKDELNVKQEDAVFEAILKWISHDPQNRKQHISVLLPKVRLALMHAEYFMNNVKMNDYVKDSEECKPVIINALKAMYDLNMNGPSNSDFTNPLTRPRLPYAILFAIGGWSGGSPTNAIEAYDARADRWVNVTCEEESPRAYHGAAYLKGYVYIIGGFDSVDYFNSVKRFDPVKKTWHQVAPMHSRRCYVSVTVLSNFIYAMGGFDGYVRLNTAERYEPETNQWTLIAPMHEQRSDASATTLYGKVYICGGFNGNECLFTAEVYNTESNQWTVIAPMRSRRSGIGVIAYGEHVYAVGGFDGANRLRSAEAYSPVANTWRTIPTMFNPRSNFGIEVVDDLLFVVGGFNGFTTTFNVECYDEKTDEWYDAHDMSIYRSALSCCVVPGLANVGEYAARRDNFTGLALRDEVKYSASTSTLPV.

The BTB domain maps to 39–106 (CDVVIKVNGF…AYTRTVPITP (68 aa)). Kelch repeat units lie at residues 292-339 (ILFA…YLKG), 340-386 (YVYI…VLSN), 388-433 (IYAM…TLYG), 434-480 (KVYI…AYGE), 481-527 (HVYA…VVDD), and 529-574 (LFVV…VVPG). Ser501 is subject to Phosphoserine.

Self-associates. Interacts with CUL3; indicative for the participation in an E3 ubiquitin ligase complex. As to expression, testis specific.

The protein localises to the cytoplasm. It functions in the pathway protein modification; protein ubiquitination. May be a substrate-specific adapter of a CUL3-based E3 ubiquitin-protein ligase complex which mediates the ubiquitination and subsequent proteasomal degradation of target proteins during spermatogenesis. Required for male fertility. In Mus musculus (Mouse), this protein is Kelch-like protein 10 (Klhl10).